The sequence spans 222 residues: GEM-like protein 4 (222 aa).

One can recognise a GRAM domain in the interval 95-173 (KIFKRLFRVS…CKIDRVNQSQ (79 aa)).

The protein belongs to the GEM family.

The protein is GEM-like protein 4 of Arabidopsis thaliana (Mouse-ear cress).